The following is a 175-amino-acid chain: Putative lipoprotein LppN (175 aa).

Positions 1-20 are cleaved as a signal peptide; it reads MRLPGRHVLYALSAVTMLAA. Cysteine 21 carries N-palmitoyl cysteine lipidation. Residue cysteine 21 is the site of S-diacylglycerol cysteine attachment. Residues 31-56 are disordered; it reads ASTNMNPTNPPATAETATVSPTPAPQ. Residues 33–48 are compositionally biased toward low complexity; that stretch reads TNMNPTNPPATAETAT.

The protein localises to the cell membrane. This is Putative lipoprotein LppN (lppN) from Mycobacterium bovis (strain ATCC BAA-935 / AF2122/97).